The following is a 207-amino-acid chain: Thymidylate kinase (207 aa).

12 to 19 (GVDGAGKS) serves as a coordination point for ATP.

The protein belongs to the thymidylate kinase family.

The catalysed reaction is dTMP + ATP = dTDP + ADP. Phosphorylation of dTMP to form dTDP in both de novo and salvage pathways of dTTP synthesis. This is Thymidylate kinase from Bordetella petrii (strain ATCC BAA-461 / DSM 12804 / CCUG 43448).